The primary structure comprises 117 residues: Aspartate 1-decarboxylase (117 aa).

Serine 25 (schiff-base intermediate with substrate; via pyruvic acid) is an active-site residue. Position 25 is a pyruvic acid (Ser) (serine 25). Threonine 57 provides a ligand contact to substrate. Tyrosine 58 (proton donor) is an active-site residue. 73 to 75 (GAA) contributes to the substrate binding site.

This sequence belongs to the PanD family. Heterooctamer of four alpha and four beta subunits. Pyruvate is required as a cofactor. Is synthesized initially as an inactive proenzyme, which is activated by self-cleavage at a specific serine bond to produce a beta-subunit with a hydroxyl group at its C-terminus and an alpha-subunit with a pyruvoyl group at its N-terminus.

It is found in the cytoplasm. It catalyses the reaction L-aspartate + H(+) = beta-alanine + CO2. It participates in cofactor biosynthesis; (R)-pantothenate biosynthesis; beta-alanine from L-aspartate: step 1/1. Catalyzes the pyruvoyl-dependent decarboxylation of aspartate to produce beta-alanine. This is Aspartate 1-decarboxylase from Bacteroides thetaiotaomicron (strain ATCC 29148 / DSM 2079 / JCM 5827 / CCUG 10774 / NCTC 10582 / VPI-5482 / E50).